The primary structure comprises 422 residues: Protein king tubby 2 (422 aa).

A disordered region spans residues 49-169; that stretch reads PSNPDQIISS…ASGHNDAEGD (121 aa). Residues 57–81 are compositionally biased toward low complexity; it reads SSGSPTTVTATGTTTGSVTTTPTSP.

Belongs to the TUB family.

The protein resides in the cytoplasm. It is found in the nucleus. The chain is Protein king tubby 2 (king-tubby2) from Culex quinquefasciatus (Southern house mosquito).